A 97-amino-acid polypeptide reads, in one-letter code: Exodeoxyribonuclease 7 small subunit (97 aa).

Positions 1-22 (MAKTASPGATPPDNGTEPLPDN) are disordered.

The protein belongs to the XseB family. Heterooligomer composed of large and small subunits.

The protein localises to the cytoplasm. It catalyses the reaction Exonucleolytic cleavage in either 5'- to 3'- or 3'- to 5'-direction to yield nucleoside 5'-phosphates.. In terms of biological role, bidirectionally degrades single-stranded DNA into large acid-insoluble oligonucleotides, which are then degraded further into small acid-soluble oligonucleotides. The polypeptide is Exodeoxyribonuclease 7 small subunit (Burkholderia ambifaria (strain MC40-6)).